A 97-amino-acid polypeptide reads, in one-letter code: UPF0250 protein RSc0326 (97 aa).

Belongs to the UPF0250 family.

The protein is UPF0250 protein RSc0326 of Ralstonia nicotianae (strain ATCC BAA-1114 / GMI1000) (Ralstonia solanacearum).